We begin with the raw amino-acid sequence, 130 residues long: Small ribosomal subunit protein uS8 (130 aa).

The protein belongs to the universal ribosomal protein uS8 family. As to quaternary structure, part of the 30S ribosomal subunit. Contacts proteins S5 and S12.

In terms of biological role, one of the primary rRNA binding proteins, it binds directly to 16S rRNA central domain where it helps coordinate assembly of the platform of the 30S subunit. This Vibrio campbellii (strain ATCC BAA-1116) protein is Small ribosomal subunit protein uS8.